The primary structure comprises 659 residues: uncharacterized protein (659 aa).

A signal peptide spans 1 to 25 (MVKRRLSAFGNAFLIYFIIFRLCCC). At 26–556 (SPQTSHWCKY…LYQESSFQKR (531 aa)) the chain is on the lumenal side. Residues Asn94, Asn111, Asn128, and Asn142 are each glycosylated (N-linked (GlcNAc...) asparagine). The region spanning 173 to 335 (AATIDSNIDE…SLLRVYGKTM (163 aa)) is the SUN domain. N-linked (GlcNAc...) asparagine glycosylation is found at Asn393 and Asn415. Residues 417-445 (TGKSESYPATSTRSFNDISPSSSSSYSTA) are disordered. Over residues 423 to 434 (YPATSTRSFNDI) the composition is skewed to polar residues. 2 N-linked (GlcNAc...) asparagine glycosylation sites follow: Asn495 and Asn504. A helical membrane pass occupies residues 557-574 (LLMLQLTVLIVLTVYMAV). The Cytoplasmic segment spans residues 575-659 (SRLPENLPTT…IIHSRSHSVC (85 aa)). 2 disordered regions span residues 580–603 (NLPTTRSSSNNPIEASRPPFSRDE) and 632–659 (KRDPNTSIRSIHEREQDKIIHSRSHSVC). The segment covering 581–592 (LPTTRSSSNNPI) has biased composition (polar residues). The segment covering 641 to 651 (SIHEREQDKII) has biased composition (basic and acidic residues).

It belongs to the SLP1 family. Interacts with EMP65.

It localises to the endoplasmic reticulum membrane. Functionally, may be involved in membrane protein folding. This is an uncharacterized protein from Schizosaccharomyces pombe (strain 972 / ATCC 24843) (Fission yeast).